The primary structure comprises 481 residues: UDP-N-acetylmuramoyl-L-alanyl-D-glutamate--L-lysine ligase (481 aa).

Serine 42 contacts UDP-N-acetyl-alpha-D-muramoyl-L-alanyl-D-glutamate. Glycine 118–threonine 124 is an ATP binding site. Residues asparagine 158, threonine 160–threonine 161, serine 187, and arginine 195 each bind UDP-N-acetyl-alpha-D-muramoyl-L-alanyl-D-glutamate. Residue lysine 229 is modified to N6-carboxylysine. Positions aspartate 404–asparagine 407 match the L-lysine recognition motif motif.

It belongs to the MurCDEF family. MurE subfamily. In terms of processing, carboxylation is probably crucial for Mg(2+) binding and, consequently, for the gamma-phosphate positioning of ATP.

The protein resides in the cytoplasm. The catalysed reaction is UDP-N-acetyl-alpha-D-muramoyl-L-alanyl-D-glutamate + L-lysine + ATP = UDP-N-acetyl-alpha-D-muramoyl-L-alanyl-gamma-D-glutamyl-L-lysine + ADP + phosphate + H(+). The protein operates within cell wall biogenesis; peptidoglycan biosynthesis. Its function is as follows. Catalyzes the addition of L-lysine to the nucleotide precursor UDP-N-acetylmuramoyl-L-alanyl-D-glutamate (UMAG) in the biosynthesis of bacterial cell-wall peptidoglycan. The chain is UDP-N-acetylmuramoyl-L-alanyl-D-glutamate--L-lysine ligase from Streptococcus thermophilus (strain ATCC BAA-491 / LMD-9).